Consider the following 75-residue polypeptide: Putative snRNP Sm-like protein (75 aa).

In terms of domain architecture, Sm spans 4-75 (RPLDVIHRSL…NVLAISPTEE (72 aa)).

The protein belongs to the snRNP Sm proteins family.

In Pyrococcus abyssi (strain GE5 / Orsay), this protein is Putative snRNP Sm-like protein.